The sequence spans 823 residues: MDLVDPSQSAAAAAGTQTVKDEVSEKCQKLFQDFLEEFRGSDGELKYQSDAEELIRPERNTLLVSFIDLEQFNQQLATTIQEEFYRVYPYLCRAVKAFARDHGNVPQNKEFYVAFQDLPTRHKIRELTTPRIGSLLRISGQVVRTHPVHPELVSGTFLCLDCQTLVRDVEQQFKYTQPSICRNPVCANRRRFMLDTNKSRFVDFQKVRIQETQAELPRGSIPRSVEVILRAEAVESCQAGDRCDFTGSLIVVPDISQLATPGVRAETSARVGGTEGYQAEGVQGLRALGVRDLSYKLVFLACYVCPTNPRFGGKDLHEEDMTAESIKNQMSVKEWEKVFEMSQDKNLYHNLCTSLFPTVHGNDEVKRGILLMLFGGVPKTTMEGTSLRGDINVCIVGDPSTAKSQFLKHVEEFSPRAVYTSGKASSAAGLTAAVVKDEESHEFVIEAGALMLADNGVCCIDEFDKMDTKDQVAIHEAMEQQTISITKAGVKATLNARTSILAAANPVGGRYDRAKSLKQNINLSAPIMSRFDLFFILVDECNEVTDYAIARRIVDLHSRIEESIDRVYTLDEVRRYLLFARQFKPKISKESEDFIVEQYKRLRQRDGTGVTKSAWRITVRQLESMIRLSEGMARMHCSDEVQPKHVKEAFRLLNKSIIRVETPDVNLDQEDEHEAEEEPQEVINGDASVPSGVNGHVNGMNGHAEEPNAATPKPSLRLNFAEYKRISNLLVLQLRKMEDEDETSQRKSELINWYLKEIESEIDSEEELVTRKQIIDKVVHRLVHYDQILIELTQTGLKGTGDEEVPKEEDPYLVVNPNYILED.

The C4-type zinc-finger motif lies at 159 to 186; that stretch reads CLDCQTLVRDVEQQFKYTQPSICRNPVC. Residues 347 to 554 form the MCM domain; the sequence is LYHNLCTSLF…TDYAIARRIV (208 aa). Position 397–404 (397–404) interacts with ATP; it reads GDPSTAKS. Positions 529–532 match the Arginine finger motif; the sequence is SRFD. The disordered stretch occupies residues 666-713; it reads NLDQEDEHEAEEEPQEVINGDASVPSGVNGHVNGMNGHAEEPNAATPK. Residues 667–680 are compositionally biased toward acidic residues; that stretch reads LDQEDEHEAEEEPQ. Low complexity predominate over residues 692–702; that stretch reads GVNGHVNGMNG.

It belongs to the MCM family. As to quaternary structure, component of the mcm2-7 complex (RLF-M). The complex forms a toroidal hexameric ring with the proposed subunit order mcm2-mcm6-mcm4-mcm7-mcm3-mcm5. Begins to associate with zmcm3, mcm4 and mcm7 into mcm complexes at the neurula stage.

The protein localises to the nucleus. It carries out the reaction ATP + H2O = ADP + phosphate + H(+). Its function is as follows. Acts as a component of the mcm2-7 complex (mcm complex) which is the putative replicative helicase essential for 'once per cell cycle' DNA replication initiation and elongation in eukaryotic cells. The active ATPase sites in the mcm2-7 ring are formed through the interaction surfaces of two neighboring subunits such that a critical structure of a conserved arginine finger motif is provided in trans relative to the ATP-binding site of the Walker A box of the adjacent subunit. The six ATPase active sites, however, are likely to contribute differentially to the complex helicase activity. The existence of maternal and zygotic forms of mcm3 and mcm6 suggests that specific forms of mcm2-7 complexes may be used during different stages of development. May replace mmcm6 in the mcm2-7 complex. This Xenopus tropicalis (Western clawed frog) protein is Zygotic DNA replication licensing factor mcm6.